Here is a 67-residue protein sequence, read N- to C-terminus: Potassium channel toxin alpha-KTx (67 aa).

Residues 1–25 (MKNIAMKTTVVLTILLLSVLTAINA) form the signal peptide. Positions 26-31 (DTMKKR) are excised as a propeptide. Disulfide bonds link Cys35-Cys54, Cys40-Cys59, Cys44-Cys61, and Cys49-Cys64.

It belongs to the short scorpion toxin superfamily. Potassium channel inhibitor family. Expressed by the venom gland.

It is found in the secreted. Functionally, blocks Kv1.1/KCNA1, Kv1.2/KCNA2 and Kv1.3/KCNA3 voltage-gated potassium channels. The protein is Potassium channel toxin alpha-KTx of Hoffmannihadrurus gertschi (Scorpion).